We begin with the raw amino-acid sequence, 627 residues long: tRNA uridine 5-carboxymethylaminomethyl modification enzyme MnmG (627 aa).

FAD-binding positions include 13 to 18, valine 125, and serine 180; that span reads GGGHAG. 274–288 is a binding site for NAD(+); that stretch reads GPRYCPSIEDKVVRF. Glutamine 371 is a binding site for FAD.

It belongs to the MnmG family. In terms of assembly, homodimer. Heterotetramer of two MnmE and two MnmG subunits. Requires FAD as cofactor.

It is found in the cytoplasm. Its function is as follows. NAD-binding protein involved in the addition of a carboxymethylaminomethyl (cmnm) group at the wobble position (U34) of certain tRNAs, forming tRNA-cmnm(5)s(2)U34. The chain is tRNA uridine 5-carboxymethylaminomethyl modification enzyme MnmG from Francisella tularensis subsp. novicida (strain U112).